We begin with the raw amino-acid sequence, 542 residues long: Putative beta-glucosidase 23 (542 aa).

The signal sequence occupies residues 1–29 (MAACTSSLVSLLLLLLLLLLLLVAGEATA). N-linked (GlcNAc...) asparagine glycosylation occurs at Asn-34. Position 88 (Gln-88) interacts with a beta-D-glucoside. N-linked (GlcNAc...) asparagine glycosylation occurs at Asn-135. An a beta-D-glucoside-binding site is contributed by His-216. Catalysis depends on Glu-262, which acts as the Proton donor. Cys-281 and Cys-289 are oxidised to a cystine. Residue Tyr-405 participates in a beta-D-glucoside binding. An N-linked (GlcNAc...) asparagine glycan is attached at Asn-445. A beta-D-glucoside is bound by residues Trp-476 and Phe-492.

The protein belongs to the glycosyl hydrolase 1 family.

The enzyme catalyses Hydrolysis of terminal, non-reducing beta-D-glucosyl residues with release of beta-D-glucose.. This Oryza sativa subsp. japonica (Rice) protein is Putative beta-glucosidase 23 (BGLU23).